Consider the following 146-residue polypeptide: uncharacterized protein (146 aa).

One can recognise an HTH marR-type domain in the interval 1 to 137 (MLSQEFFNSF…TINVMNQIHE (137 aa)).

This is an uncharacterized protein from Staphylococcus aureus (strain MRSA252).